Reading from the N-terminus, the 570-residue chain is MNEKHPGPLVVEGKLTDAERMKLESNYLRGTIAEDLNDGLTGGFKGDNFLLIRFHGMYQQDDRDIRAERAEQKLEPRHAMLLRCRLPGGVITTKQWQAIDKFAGENTIYGSIRLTNRQTFQFHGILKKNVKPVHQMLHSVGLDALATANDMNRNVLCTSNPYESQLHAEAYEWAKKISEHLLPRTRAYAEIWLDQEKVATTDEEPILGQTYLPRKFKTTVVIPPQNDIDLHANDMNFVAIAENGKLVGFNLLVGGGLSIEHGNRKTYARTASEFGYLPLEHTLAVAEAVVTTQRDWGNRTDRKNAKTKYTLERVGVETFKAEVERRAGIKFEPIRPYEFTGRSDRIGWVKGIDDKWHLTLFIENGRILDYPGRPLKTGLLEIAKIHKGDFRITANQNLIIAGVPESEKAKIEKIAKESGLMNAVTPQRENSMACVSFPTCPLAMAEAERFLPSFIDNIDNLMAKHGVSDEHIVMRVTGCPNGCGRAMLAEVGLVGKAPGRYNLHLGGNRIGTRIPRMYKENITEPEILALLDELIGRWAKEREAGEGFGDFTVRAGIIRPVLDPARDLWD.

4 residues coordinate [4Fe-4S] cluster: Cys434, Cys440, Cys479, and Cys483. Cys483 is a siroheme binding site.

Belongs to the nitrite and sulfite reductase 4Fe-4S domain family. In terms of assembly, alpha(8)-beta(8). The alpha component is a flavoprotein, the beta component is a hemoprotein. The cofactor is siroheme. Requires [4Fe-4S] cluster as cofactor.

The catalysed reaction is hydrogen sulfide + 3 NADP(+) + 3 H2O = sulfite + 3 NADPH + 4 H(+). It participates in sulfur metabolism; hydrogen sulfide biosynthesis; hydrogen sulfide from sulfite (NADPH route): step 1/1. Its function is as follows. Component of the sulfite reductase complex that catalyzes the 6-electron reduction of sulfite to sulfide. This is one of several activities required for the biosynthesis of L-cysteine from sulfate. In Escherichia coli O7:K1 (strain IAI39 / ExPEC), this protein is Sulfite reductase [NADPH] hemoprotein beta-component.